We begin with the raw amino-acid sequence, 351 residues long: Autophagy protein 5 (351 aa).

Residues 106–143 form a disordered region; sequence KSLSSPGSEREHYVRGGTRENISESGAEGEKDDNHGHD. The span at 113–143 shows a compositional bias: basic and acidic residues; it reads SEREHYVRGGTRENISESGAEGEKDDNHGHD. K186 participates in a covalent cross-link: Glycyl lysine isopeptide (Lys-Gly) (interchain with G-Cter in ATG12).

The protein belongs to the ATG5 family. In terms of assembly, conjugated with ATG12. Post-translationally, conjugated to ATG12; which is essential for autophagy.

The protein resides in the preautophagosomal structure membrane. Its function is as follows. Involved in cytoplasm to vacuole transport (Cvt) and autophagic vesicle formation. Autophagy is essential for maintenance of amino acid levels and protein synthesis under nitrogen starvation. Required for selective autophagic degradation of the nucleus (nucleophagy). Also required for mitophagy, which eliminates defective or superfluous mitochondria in order to fulfill cellular energy requirements and prevent excess ROS production. Conjugation with ATG12, through a ubiquitin-like conjugating system involving ATG7 as an E1-like activating enzyme and ATG10 as an E2-like conjugating enzyme, is essential for its function. The ATG12-ATG5 conjugate acts as an E3-like enzyme which is required for lipidation of ATG8 and ATG8 association to the vesicle membranes. This is Autophagy protein 5 (ATG5) from Coccidioides immitis (strain RS) (Valley fever fungus).